The sequence spans 531 residues: MLMSTTPYFGEVSKRRTFAIISHPDAGKTTITEKVLLFGRAIQVAGTVKGRGSNQHAKSDWMEMEKERGISVTTSVMQFPYGDCLVNLLDTPGHEDFSEDTYRTLTAVDSCLMVIDAAKGVEDRTRKLMEVTRLRDTPIVTFMNKLDREIRDPMELMDEVENELKIACSPITWPIGCGKEFKGVYHIHRDETILYTSGQGHTIQEERIIKGLDNPELDQAVGADLAAQLREELELVLGASHEFDRELFLQGELTPVFFGTALGNFGVDHMLDGLTQWAPSPMPRQAAERVVEASEEKFTGFVFKIQANMDPKHRDRIAFVRIVSGTYKQGMKMNHVRLGKQVNISDAVTFMAGDRARAEEAFAGDIIGLHNHGTIQIGDTFTQGETLKFTGIPNFAPELFRRIRLRDPLKQKQLLKGLVQLSEEGAVQVFRPLQNNDLIVGAVGVLQFDVVVSRLKSEYNVEAIYEGVNVATARWVECDDVKKFEEFKRKNQSNLALDGGDNLAYIAPTMVNLNLAQERSPEVKFRATREH.

One can recognise a tr-type G domain in the interval 13–282 (SKRRTFAIIS…GLTQWAPSPM (270 aa)). GTP is bound by residues 22-29 (SHPDAGKT), 90-94 (DTPGH), and 144-147 (NKLD).

Belongs to the TRAFAC class translation factor GTPase superfamily. Classic translation factor GTPase family. PrfC subfamily.

The protein resides in the cytoplasm. Increases the formation of ribosomal termination complexes and stimulates activities of RF-1 and RF-2. It binds guanine nucleotides and has strong preference for UGA stop codons. It may interact directly with the ribosome. The stimulation of RF-1 and RF-2 is significantly reduced by GTP and GDP, but not by GMP. This Vibrio cholerae serotype O1 (strain ATCC 39315 / El Tor Inaba N16961) protein is Peptide chain release factor 3.